We begin with the raw amino-acid sequence, 126 residues long: uncharacterized protein (126 aa).

A helical membrane pass occupies residues 55–77 (MLLINSNLVLSGLLLFIDVYRAA).

The protein resides in the membrane. This is an uncharacterized protein from Dictyostelium discoideum (Social amoeba).